Consider the following 221-residue polypeptide: MPGTSELITVAVPKGRLLQESSALFERALGVSPRKLLEGTRKLAADAPEAGLRFISIRAGDVASYVEHGAAEVGIVGLDVLREEPRDLYEPLDLGIGRCTVIVARPKGARPLPRGVAPRVATKYLSLAARHFAAKGVPAEIIPLHGSIEVAPSLGLADTIVDITETGETLRANGLVIEEKVLEVSARLVVNRVALKLHPERLRRLIEALRAAVAEAGAEAR.

This sequence belongs to the ATP phosphoribosyltransferase family. Short subfamily. As to quaternary structure, heteromultimer composed of HisG and HisZ subunits.

The protein resides in the cytoplasm. The catalysed reaction is 1-(5-phospho-beta-D-ribosyl)-ATP + diphosphate = 5-phospho-alpha-D-ribose 1-diphosphate + ATP. Its pathway is amino-acid biosynthesis; L-histidine biosynthesis; L-histidine from 5-phospho-alpha-D-ribose 1-diphosphate: step 1/9. Catalyzes the condensation of ATP and 5-phosphoribose 1-diphosphate to form N'-(5'-phosphoribosyl)-ATP (PR-ATP). Has a crucial role in the pathway because the rate of histidine biosynthesis seems to be controlled primarily by regulation of HisG enzymatic activity. This chain is ATP phosphoribosyltransferase, found in Anaeromyxobacter dehalogenans (strain 2CP-1 / ATCC BAA-258).